The following is a 349-amino-acid chain: MRKIIHIDCDCFYAALEMRDDPSLRGKALAVGGSPDKRGVVATCSYEARAYGVRSAMAMRTALKLCPDLLVVRPRFDVYRAVSKQIHAIFRDYTDLIEPLSLDEAYLDVSASPHFAGSATRIAQDIRRRVAEELHITVSAGVAPNKFLAKIASDWRKPDGLFVITPEQVDGFVAELPVAKLHGVGKVTAERLARMGIRTCADLRQGSKLSLVREFGSFGERLWGLAHGIDERPVEVDSRRQSVSVECTFDRDLPDLAACLEELPTLLEELDGRLQRLDGSYRPDKPFVKLKFHDFTQTTVEQSGAGRDLESYRQLLGQAFARGNRPVRLIGVGVRLLDLQGAHEQLRLF.

Positions 4–185 (IIHIDCDCFY…LPVAKLHGVG (182 aa)) constitute a UmuC domain. Asp8 and Asp103 together coordinate Mg(2+). Glu104 is an active-site residue.

Belongs to the DNA polymerase type-Y family. Monomer. Mg(2+) is required as a cofactor.

It is found in the cytoplasm. The catalysed reaction is DNA(n) + a 2'-deoxyribonucleoside 5'-triphosphate = DNA(n+1) + diphosphate. In terms of biological role, poorly processive, error-prone DNA polymerase involved in untargeted mutagenesis. Copies undamaged DNA at stalled replication forks, which arise in vivo from mismatched or misaligned primer ends. These misaligned primers can be extended by PolIV. Exhibits no 3'-5' exonuclease (proofreading) activity. May be involved in translesional synthesis, in conjunction with the beta clamp from PolIII. The chain is DNA polymerase IV from Pseudomonas aeruginosa (strain UCBPP-PA14).